Here is a 447-residue protein sequence, read N- to C-terminus: ATP-dependent protease ATPase subunit HslU (447 aa).

Residues Ile-18, 60–65 (GVGKTE), Asp-259, Glu-325, and Arg-397 each bind ATP.

This sequence belongs to the ClpX chaperone family. HslU subfamily. A double ring-shaped homohexamer of HslV is capped on each side by a ring-shaped HslU homohexamer. The assembly of the HslU/HslV complex is dependent on binding of ATP.

Its subcellular location is the cytoplasm. Its function is as follows. ATPase subunit of a proteasome-like degradation complex; this subunit has chaperone activity. The binding of ATP and its subsequent hydrolysis by HslU are essential for unfolding of protein substrates subsequently hydrolyzed by HslV. HslU recognizes the N-terminal part of its protein substrates and unfolds these before they are guided to HslV for hydrolysis. The chain is ATP-dependent protease ATPase subunit HslU from Burkholderia cenocepacia (strain HI2424).